The sequence spans 522 residues: Ribonuclease Y (522 aa).

A helical transmembrane segment spans residues 3–23 (ELIMYILATAVVSIGVGIVAG). Residues 212-272 (CVSIFNIESD…VRREVARLSL (61 aa)) form the KH domain. One can recognise an HD domain in the interval 338-431 (LLQHSREVAK…VQVCDAISGA (94 aa)).

This sequence belongs to the RNase Y family.

Its subcellular location is the cell membrane. Endoribonuclease that initiates mRNA decay. The chain is Ribonuclease Y from Cytophaga hutchinsonii (strain ATCC 33406 / DSM 1761 / CIP 103989 / NBRC 15051 / NCIMB 9469 / D465).